A 234-amino-acid polypeptide reads, in one-letter code: MDMLLNTARAWGLRLDQRQIEQFARYSAELRAWNTRVNLTAITDEEGIVARHFLDSLRCALSWGDAPSSLIDIGSGAGFPGLPLKILRPELRVALVESVGKKAAFLRHMITVLDLRDVTVLTARAETVGRDPQHREQYDVVTARAVAELATLAEYCLPLCRVHGRVLAPKGSDIADEVARARTAIERLGGRVIDVEPVTIPGVEPRTLVVIAKVAPTLAAYPRAVGVPARRPIH.

S-adenosyl-L-methionine contacts are provided by residues G74, F79, 125 to 126, and R144; that span reads AE.

Belongs to the methyltransferase superfamily. RNA methyltransferase RsmG family.

The protein resides in the cytoplasm. Functionally, specifically methylates the N7 position of a guanine in 16S rRNA. This chain is Ribosomal RNA small subunit methyltransferase G, found in Roseiflexus sp. (strain RS-1).